The following is a 161-amino-acid chain: RNA pyrophosphohydrolase (161 aa).

Residues P12–K154 form the Nudix hydrolase domain. The short motif at G46 to G67 is the Nudix box element.

This sequence belongs to the Nudix hydrolase family. RppH subfamily. A divalent metal cation is required as a cofactor.

Accelerates the degradation of transcripts by removing pyrophosphate from the 5'-end of triphosphorylated RNA, leading to a more labile monophosphorylated state that can stimulate subsequent ribonuclease cleavage. This is RNA pyrophosphohydrolase from Rickettsia conorii (strain ATCC VR-613 / Malish 7).